A 179-amino-acid chain; its full sequence is Large ribosomal subunit protein uL5 (179 aa).

The protein belongs to the universal ribosomal protein uL5 family. Part of the 50S ribosomal subunit; part of the 5S rRNA/L5/L18/L25 subcomplex. Contacts the 5S rRNA and the P site tRNA. Forms a bridge to the 30S subunit in the 70S ribosome.

Functionally, this is one of the proteins that bind and probably mediate the attachment of the 5S RNA into the large ribosomal subunit, where it forms part of the central protuberance. In the 70S ribosome it contacts protein S13 of the 30S subunit (bridge B1b), connecting the 2 subunits; this bridge is implicated in subunit movement. Contacts the P site tRNA; the 5S rRNA and some of its associated proteins might help stabilize positioning of ribosome-bound tRNAs. The sequence is that of Large ribosomal subunit protein uL5 from Staphylococcus haemolyticus (strain JCSC1435).